The primary structure comprises 119 residues: Large ribosomal subunit protein bL20 (119 aa).

The protein belongs to the bacterial ribosomal protein bL20 family.

Binds directly to 23S ribosomal RNA and is necessary for the in vitro assembly process of the 50S ribosomal subunit. It is not involved in the protein synthesizing functions of that subunit. The protein is Large ribosomal subunit protein bL20 of Streptococcus pneumoniae serotype 2 (strain D39 / NCTC 7466).